Reading from the N-terminus, the 315-residue chain is Protoheme IX farnesyltransferase 1 (315 aa).

Transmembrane regions (helical) follow at residues 30–50 (PGIIISNSLAALGGFWIAWIQ), 56–76 (GGPGIFAAMAVAMIGTALVMA), 106–126 (IPPPVMILYGTCLGACGFIML), 132–152 (LTAVLGLLAFLLYAVVYTLWF), 162–182 (VGSFPGAAPPLIGYCALTGYI), 186–206 (AILLYAIMFLWQPPHFWAIGI), 249–269 (LYIDVSPFYTASALLLGAIWL), and 289–309 (FFYSIVYFSLLFLILMADSFI).

The protein belongs to the UbiA prenyltransferase family. Protoheme IX farnesyltransferase subfamily. As to quaternary structure, interacts with CtaA.

It localises to the cell membrane. The enzyme catalyses heme b + (2E,6E)-farnesyl diphosphate + H2O = Fe(II)-heme o + diphosphate. It participates in porphyrin-containing compound metabolism; heme O biosynthesis; heme O from protoheme: step 1/1. Converts heme B (protoheme IX) to heme O by substitution of the vinyl group on carbon 2 of heme B porphyrin ring with a hydroxyethyl farnesyl side group. The protein is Protoheme IX farnesyltransferase 1 of Bacillus velezensis (strain DSM 23117 / BGSC 10A6 / LMG 26770 / FZB42) (Bacillus amyloliquefaciens subsp. plantarum).